The chain runs to 877 residues: DNA repair protein rad16 (877 aa).

Ser71 is subject to Phosphoserine; by CK2. A disordered region spans residues Ser440 to Asp490. Positions Lys444 to Ala454 are enriched in basic and acidic residues. A compositionally biased stretch (polar residues) spans Asn475–Asp490. Residues Arg652–Gln732 form the ERCC4 domain.

The protein belongs to the XPF family. In terms of assembly, heterodimer composed of rad16 and swi10.

The protein localises to the nucleus. It localises to the cytoplasm. Its subcellular location is the cytoskeleton. It is found in the microtubule organizing center. The protein resides in the spindle pole body. Its function is as follows. Endonuclease that specifically degrades single-stranded DNA and which is involved in nucleotide excision repair of DNA damaged with UV light, bulky adducts, or cross-linking agents. Required for double strand break-induced interchromosomal gene conversion. The protein is DNA repair protein rad16 (rad16) of Schizosaccharomyces pombe (strain 972 / ATCC 24843) (Fission yeast).